A 354-amino-acid chain; its full sequence is Methylthioribose-1-phosphate isomerase (354 aa).

D246 functions as the Proton donor in the catalytic mechanism.

It belongs to the eIF-2B alpha/beta/delta subunits family. MtnA subfamily.

It is found in the cytoplasm. The protein resides in the nucleus. It catalyses the reaction 5-(methylsulfanyl)-alpha-D-ribose 1-phosphate = 5-(methylsulfanyl)-D-ribulose 1-phosphate. It functions in the pathway amino-acid biosynthesis; L-methionine biosynthesis via salvage pathway; L-methionine from S-methyl-5-thio-alpha-D-ribose 1-phosphate: step 1/6. Catalyzes the interconversion of methylthioribose-1-phosphate (MTR-1-P) into methylthioribulose-1-phosphate (MTRu-1-P). This chain is Methylthioribose-1-phosphate isomerase (mri1), found in Xenopus laevis (African clawed frog).